We begin with the raw amino-acid sequence, 569 residues long: Probable pyruvate decarboxylase Pdc101 (569 aa).

Residues Asp33 and His120 each contribute to the substrate site. Residue Ser233 is modified to Phosphoserine. Positions 396 to 478 (DSWFNGLQMK…FLLNNRGYTI (83 aa)) are thiamine pyrophosphate binding. The Mg(2+) site is built by Asp446, Asn473, and Gly475. Residue Glu479 participates in substrate binding. Thr521 is modified (phosphothreonine). The residue at position 522 (Ser522) is a Phosphoserine.

Belongs to the TPP enzyme family. Homotetramer. Requires a metal cation as cofactor. Thiamine diphosphate is required as a cofactor.

The enzyme catalyses a 2-oxocarboxylate + H(+) = an aldehyde + CO2. This Schizosaccharomyces pombe (strain 972 / ATCC 24843) (Fission yeast) protein is Probable pyruvate decarboxylase Pdc101 (pdc101).